The chain runs to 205 residues: N-(5'-phosphoribosyl)anthranilate isomerase (205 aa).

The protein belongs to the TrpF family.

It carries out the reaction N-(5-phospho-beta-D-ribosyl)anthranilate = 1-(2-carboxyphenylamino)-1-deoxy-D-ribulose 5-phosphate. It functions in the pathway amino-acid biosynthesis; L-tryptophan biosynthesis; L-tryptophan from chorismate: step 3/5. The polypeptide is N-(5'-phosphoribosyl)anthranilate isomerase (Acidiphilium cryptum (strain JF-5)).